The following is a 152-amino-acid chain: Large ribosomal subunit protein uL30 (152 aa).

It belongs to the universal ribosomal protein uL30 family. In terms of assembly, part of the 50S ribosomal subunit.

This chain is Large ribosomal subunit protein uL30, found in Methanobrevibacter smithii (strain ATCC 35061 / DSM 861 / OCM 144 / PS).